We begin with the raw amino-acid sequence, 110 residues long: MSCQQNQQQCQPPPKCPPKCTPKCPPKCPPKCPPQCPAPCFPAVSSCCGPSSGSCCGPSSGGCCSSGAGGCSLSHHRPRLFHRRRHQSPDCCESEPSGGSGCCHSSGGCC.

Low complexity predominate over residues 1 to 10 (MSCQQNQQQC). The tract at residues 1–23 (MSCQQNQQQCQPPPKCPPKCTPK) is disordered. The span at 11 to 23 (QPPPKCPPKCTPK) shows a compositional bias: pro residues.

It belongs to the LCE family. In terms of assembly, interacts with CYSRT1; the interaction is direct. As to expression, skin-specific. Expression was readily detected in adult trunk skin, adult arm skin, fetal skin, penal skin, vulva, esophagus and tongue. Not expressed in the cervix, rectum, lung, colon, or placenta.

In terms of biological role, precursors of the cornified envelope of the stratum. This chain is Late cornified envelope protein 2C (LCE2C), found in Homo sapiens (Human).